A 690-amino-acid polypeptide reads, in one-letter code: Tripartite terminase subunit 3 (690 aa).

A Walker A motif motif is present at residues 226-233; the sequence is IPRRHGKT. Residues 321–326 carry the Walker B motif motif; that stretch reads LLFVDE. The active-site For ATPase activity is glutamate 326. Catalysis depends on for nuclease activity residues aspartate 481, glutamate 555, and aspartate 667.

The protein belongs to the herpesviridae TRM3 protein family. Interacts with the terminase subunits TRM1 and TRM2. Interacts with portal protein.

The protein resides in the host nucleus. Its function is as follows. Component of the molecular motor that translocates viral genomic DNA in empty capsid during DNA packaging. Forms a tripartite terminase complex together with TRM1 and TRM2 in the host cytoplasm. Once the complex reaches the host nucleus, it interacts with the capsid portal vertex. This portal forms a ring in which genomic DNA is translocated into the capsid. TRM3 carries an RNase H-like nuclease activity that plays an important role for the cleavage of concatemeric viral DNA into unit length genomes. In Homo sapiens (Human), this protein is Tripartite terminase subunit 3.